The primary structure comprises 270 residues: Tetraspanin-17 (270 aa).

Residues 1-19 (MPGKHQHFQEPEVGCCGKY) lie on the Cytoplasmic side of the membrane. Residues 20–40 (FLFGFNIVFWVLGALFLAIGL) form a helical membrane-spanning segment. The Extracellular segment spans residues 41 to 63 (WAWGEKGVLSNISALTDLGGLDP). N51 is a glycosylation site (N-linked (GlcNAc...) asparagine). The helical transmembrane segment at 64-84 (VWLFVVVGGVMSVLGFAGCIG) threads the bilayer. The Cytoplasmic segment spans residues 85-94 (ALRENTFLLK). The chain crosses the membrane as a helical span at residues 95-115 (FFSVFLGLIFFLELATGILAF). The Extracellular portion of the chain corresponds to 116–234 (VFKDWIRDQL…GQFEKWLQDN (119 aa)). 4 disulfides stabilise this stretch: C155–C223, C156–C188, C172–C182, and C189–C202. Residue N171 is glycosylated (N-linked (GlcNAc...) asparagine). Residues 235-255 (LIVVAGVFMGIALLQIFGICL) form a helical membrane-spanning segment. Residues 256–270 (AQNLVSDIKAVKANW) are Cytoplasmic-facing.

The protein belongs to the tetraspanin (TM4SF) family. Interacts with ADAM10; the interaction influences ADAM10 substrate specificity, endocytosis and turnover.

It is found in the cell membrane. Functionally, part of TspanC8 subgroup, composed of 6 members that interact with the transmembrane metalloprotease ADAM10. This interaction is required for ADAM10 exit from the endoplasmic reticulum and for enzymatic maturation and trafficking to the cell surface as well as substrate specificity. Different TspanC8/ADAM10 complexes have distinct substrates. Seems to regulate VE-cadherin expression in endothelial cells probably through interaction with ADAM10, promoting leukocyte transmigration. The chain is Tetraspanin-17 from Homo sapiens (Human).